The sequence spans 380 residues: Cytochrome b (380 aa).

The next 4 helical transmembrane spans lie at 33–53, 77–98, 113–133, and 178–198; these read FGSL…FLAM, WLIR…FLHV, WNMG…GYVL, and FFAF…VHLL. Positions 83 and 97 each coordinate heme b. His182 and His196 together coordinate heme b. Position 201 (His201) interacts with a ubiquinone. Helical transmembrane passes span 226–246, 288–308, 320–340, and 347–367; these read IKDF…TLFF, LGGV…PLLH, ITQI…WIGG, and FITI…IFMP.

It belongs to the cytochrome b family. In terms of assembly, the cytochrome bc1 complex contains 11 subunits: 3 respiratory subunits (MT-CYB, CYC1 and UQCRFS1), 2 core proteins (UQCRC1 and UQCRC2) and 6 low-molecular weight proteins (UQCRH/QCR6, UQCRB/QCR7, UQCRQ/QCR8, UQCR10/QCR9, UQCR11/QCR10 and a cleavage product of UQCRFS1). This cytochrome bc1 complex then forms a dimer. Heme b serves as cofactor.

It localises to the mitochondrion inner membrane. In terms of biological role, component of the ubiquinol-cytochrome c reductase complex (complex III or cytochrome b-c1 complex) that is part of the mitochondrial respiratory chain. The b-c1 complex mediates electron transfer from ubiquinol to cytochrome c. Contributes to the generation of a proton gradient across the mitochondrial membrane that is then used for ATP synthesis. The protein is Cytochrome b (MT-CYB) of Microtus oregoni (Creeping vole).